The chain runs to 358 residues: Chorismate synthase (358 aa).

Arg46 contacts NADP(+). FMN contacts are provided by residues 123 to 125 (RSS), 235 to 236 (NA), Gly275, 290 to 294 (KPTPS), and Arg316.

It belongs to the chorismate synthase family. In terms of assembly, homotetramer. FMNH2 serves as cofactor.

The catalysed reaction is 5-O-(1-carboxyvinyl)-3-phosphoshikimate = chorismate + phosphate. It participates in metabolic intermediate biosynthesis; chorismate biosynthesis; chorismate from D-erythrose 4-phosphate and phosphoenolpyruvate: step 7/7. Its function is as follows. Catalyzes the anti-1,4-elimination of the C-3 phosphate and the C-6 proR hydrogen from 5-enolpyruvylshikimate-3-phosphate (EPSP) to yield chorismate, which is the branch point compound that serves as the starting substrate for the three terminal pathways of aromatic amino acid biosynthesis. This reaction introduces a second double bond into the aromatic ring system. In Helicobacter hepaticus (strain ATCC 51449 / 3B1), this protein is Chorismate synthase.